The sequence spans 368 residues: Transmembrane protein 26 (368 aa).

The next 3 membrane-spanning stretches (helical) occupy residues 4–24 (LVFLNALATRLLFLLHSLVGV), 36–56 (YWLLALLNLLLFLETALTLKF), and 65–85 (FSPAIFLYLISIVPSLWLLEL). Asn110 is a glycosylation site (N-linked (GlcNAc...) asparagine). 5 helical membrane-spanning segments follow: residues 150–170 (QTFLLMLIIGRWLLPIGGGIT), 177–197 (LLLMFVGTAADILEFTSETLE), 208–228 (VYAILVIWTWSMLQFPLDLAV), 257–277 (IGISVFIQDGPFLVVRLILMT), and 281–301 (VINQMLVFFAAKNFLVVVLQL). The segment at 324–368 (GEHGCRAQTSESGPSQRDWQNESKEGLAIPLRGSPVTSDDSHHTP) is disordered. Residues 330 to 341 (AQTSESGPSQRD) are compositionally biased toward polar residues.

It localises to the membrane. The chain is Transmembrane protein 26 (TMEM26) from Homo sapiens (Human).